A 598-amino-acid polypeptide reads, in one-letter code: Beta-fructofuranosidase, insoluble isoenzyme 2 (598 aa).

The first 25 residues, 1–25, serve as a signal peptide directing secretion; sequence MGVLGSRVAWAWLVQLLLLQQLAGA. D69 is an active-site residue. N164, N189, and N348 each carry an N-linked (GlcNAc...) asparagine glycan.

The protein belongs to the glycosyl hydrolase 32 family.

Its subcellular location is the secreted. It localises to the extracellular space. The protein localises to the apoplast. The protein resides in the cell wall. It carries out the reaction Hydrolysis of terminal non-reducing beta-D-fructofuranoside residues in beta-D-fructofuranosides.. Its function is as follows. May play a role in sucrose partitioning during seed development. This chain is Beta-fructofuranosidase, insoluble isoenzyme 2 (CIN2), found in Oryza sativa subsp. indica (Rice).